The chain runs to 197 residues: Imidazoleglycerol-phosphate dehydratase (197 aa).

This sequence belongs to the imidazoleglycerol-phosphate dehydratase family.

The protein localises to the cytoplasm. The enzyme catalyses D-erythro-1-(imidazol-4-yl)glycerol 3-phosphate = 3-(imidazol-4-yl)-2-oxopropyl phosphate + H2O. The protein operates within amino-acid biosynthesis; L-histidine biosynthesis; L-histidine from 5-phospho-alpha-D-ribose 1-diphosphate: step 6/9. The chain is Imidazoleglycerol-phosphate dehydratase from Syntrophomonas wolfei subsp. wolfei (strain DSM 2245B / Goettingen).